A 331-amino-acid chain; its full sequence is CRISPR-associated endonuclease Cas1 (331 aa).

Mn(2+) is bound by residues Glu155, His221, and Glu236.

Belongs to the CRISPR-associated endonuclease Cas1 family. In terms of assembly, homodimer, forms a heterotetramer with a Cas2 homodimer. It depends on Mg(2+) as a cofactor. Mn(2+) is required as a cofactor.

Functionally, CRISPR (clustered regularly interspaced short palindromic repeat), is an adaptive immune system that provides protection against mobile genetic elements (viruses, transposable elements and conjugative plasmids). CRISPR clusters contain spacers, sequences complementary to antecedent mobile elements, and target invading nucleic acids. CRISPR clusters are transcribed and processed into CRISPR RNA (crRNA). Acts as a dsDNA endonuclease. Involved in the integration of spacer DNA into the CRISPR cassette. The sequence is that of CRISPR-associated endonuclease Cas1 from Methanopyrus kandleri (strain AV19 / DSM 6324 / JCM 9639 / NBRC 100938).